The sequence spans 140 residues: Putative pre-16S rRNA nuclease (140 aa).

This sequence belongs to the YqgF nuclease family.

It is found in the cytoplasm. In terms of biological role, could be a nuclease involved in processing of the 5'-end of pre-16S rRNA. This is Putative pre-16S rRNA nuclease from Aeromonas hydrophila subsp. hydrophila (strain ATCC 7966 / DSM 30187 / BCRC 13018 / CCUG 14551 / JCM 1027 / KCTC 2358 / NCIMB 9240 / NCTC 8049).